The primary structure comprises 170 residues: MVSVFSSLRQSFKGLLVLVPVLIGLAFISPAEAVQWDAETLTVPVNPDGAEVTFTDREINAGRKVFNTSCGTCHAGGITKTNQNVGLDPETLALATPARDNVDALVDYMKDPTSYDGEYSISDVHPSMRSAELYPAMRDLDDEDLRLMAGYILVSPKVQGSSWGGGKIYF.

The N-terminal stretch at 1–33 (MVSVFSSLRQSFKGLLVLVPVLIGLAFISPAEA) is a signal peptide. Residues cysteine 70, cysteine 73, histidine 74, and methionine 137 each contribute to the heme c site.

It belongs to the cytochrome c family. PsbV subfamily. In terms of assembly, PSII is composed of 1 copy each of membrane proteins PsbA, PsbB, PsbC, PsbD, PsbE, PsbF, PsbH, PsbI, PsbJ, PsbK, PsbL, PsbM, PsbT, PsbX, PsbY, PsbZ, Psb30/Ycf12, peripheral proteins PsbO, CyanoQ (PsbQ), PsbU, PsbV and a large number of cofactors. It forms dimeric complexes. Requires heme c as cofactor.

It is found in the cellular thylakoid membrane. Its function is as follows. One of the extrinsic, lumenal subunits of photosystem II (PSII). PSII is a light-driven water plastoquinone oxidoreductase, using light energy to abstract electrons from H(2)O, generating a proton gradient subsequently used for ATP formation. The extrinsic proteins stabilize the structure of photosystem II oxygen-evolving complex (OEC), the ion environment of oxygen evolution and protect the OEC against heat-induced inactivation. Low-potential cytochrome c that plays a role in the OEC of PSII. This chain is Photosystem II extrinsic protein V, found in Synechococcus sp. (strain CC9902).